Consider the following 170-residue polypeptide: Putative pre-16S rRNA nuclease (170 aa).

Positions 1 to 18 (MGTDDRLPDRPGADDPGR) are enriched in basic and acidic residues. Residues 1 to 22 (MGTDDRLPDRPGADDPGRGRRI) are disordered.

The protein belongs to the YqgF nuclease family.

The protein localises to the cytoplasm. In terms of biological role, could be a nuclease involved in processing of the 5'-end of pre-16S rRNA. This chain is Putative pre-16S rRNA nuclease, found in Mycolicibacterium smegmatis (strain ATCC 700084 / mc(2)155) (Mycobacterium smegmatis).